Here is a 235-residue protein sequence, read N- to C-terminus: Phosphoribosylaminoimidazole-succinocarboxamide synthase (235 aa).

It belongs to the SAICAR synthetase family.

It catalyses the reaction 5-amino-1-(5-phospho-D-ribosyl)imidazole-4-carboxylate + L-aspartate + ATP = (2S)-2-[5-amino-1-(5-phospho-beta-D-ribosyl)imidazole-4-carboxamido]succinate + ADP + phosphate + 2 H(+). It functions in the pathway purine metabolism; IMP biosynthesis via de novo pathway; 5-amino-1-(5-phospho-D-ribosyl)imidazole-4-carboxamide from 5-amino-1-(5-phospho-D-ribosyl)imidazole-4-carboxylate: step 1/2. In Chlorobium chlorochromatii (strain CaD3), this protein is Phosphoribosylaminoimidazole-succinocarboxamide synthase.